A 148-amino-acid chain; its full sequence is 2S seed storage protein 1 (148 aa).

A signal peptide spans 1 to 19 (MARFTIVLAVLFAAALVSA). A propeptide spanning residues 20 to 38 (SAHKTVVTTSVAEEGEEEN) is cleaved from the precursor. Residues 24 to 94 (TVVTTSVAEE…ECCNELRDVK (71 aa)) form an involved in IgE-binding region. Disulfide bonds link Cys-42/Cys-97, Cys-54/Cys-86, Cys-87/Cys-133, and Cys-99/Cys-141. Immunodominant epitope; binds to IgE of 14 patients out of 15 tested stretches follow at residues 46-55 (SRQCQMRHCM), 48-57 (QCQMRHCMQW), and 76-86 (NQGQFEHFREC). The propeptide occupies 69–76 (FLRSAEAN). Positions 147-148 (FA) are excised as a propeptide.

Belongs to the 2S seed storage albumins family. As to quaternary structure, the mature protein consists of a small and a large chain linked by disulfide bonds. In terms of tissue distribution, expressed in seeds (at protein level).

Functionally, seed storage protein. This Sesamum indicum (Oriental sesame) protein is 2S seed storage protein 1.